The primary structure comprises 234 residues: Large ribosomal subunit protein uL1 (234 aa).

The protein belongs to the universal ribosomal protein uL1 family. In terms of assembly, part of the 50S ribosomal subunit.

In terms of biological role, binds directly to 23S rRNA. The L1 stalk is quite mobile in the ribosome, and is involved in E site tRNA release. Its function is as follows. Protein L1 is also a translational repressor protein, it controls the translation of the L11 operon by binding to its mRNA. The protein is Large ribosomal subunit protein uL1 of Prochlorococcus marinus (strain SARG / CCMP1375 / SS120).